A 266-amino-acid polypeptide reads, in one-letter code: NADP-dependent mannitol dehydrogenase (266 aa).

NADP(+) contacts are provided by asparagine 107 and lysine 140. Serine 159 acts as the Proton donor in catalysis. The NADP(+) site is built by tyrosine 174, lysine 178, isoleucine 206, and threonine 208. Tyrosine 174 (proton acceptor) is an active-site residue. Lysine 178 functions as the Lowers pKa of active site Tyr in the catalytic mechanism.

The protein belongs to the short-chain dehydrogenases/reductases (SDR) family. Homotetramer.

It catalyses the reaction D-mannitol + NADP(+) = D-fructose + NADPH + H(+). Its function is as follows. Catalyzes the interconversion between D-mannitol and D-fructose. Plays a key role in liamocins biosynthesis by providing the mannitol moity that is linked to 3,5-dihydroxydecanoic acid (provided by the HR-PKS PKS1) via ester bond formation catalyzed by the esterase EST1. This is NADP-dependent mannitol dehydrogenase from Aureobasidium melanogenum (Aureobasidium pullulans var. melanogenum).